The following is a 227-amino-acid chain: Small ribosomal subunit protein uS3 (227 aa).

Residues 39 to 107 enclose the KH type-2 domain; the sequence is VREFLDKRLV…PVHINIEEVR (69 aa).

It belongs to the universal ribosomal protein uS3 family. As to quaternary structure, part of the 30S ribosomal subunit. Forms a tight complex with proteins S10 and S14.

Functionally, binds the lower part of the 30S subunit head. Binds mRNA in the 70S ribosome, positioning it for translation. The chain is Small ribosomal subunit protein uS3 from Marinobacter nauticus (strain ATCC 700491 / DSM 11845 / VT8) (Marinobacter aquaeolei).